Reading from the N-terminus, the 204-residue chain is UPF0637 protein LMHCC_1566 (204 aa).

The protein belongs to the UPF0637 family.

In Listeria monocytogenes serotype 4a (strain HCC23), this protein is UPF0637 protein LMHCC_1566.